The following is a 417-amino-acid chain: Gamma-glutamyl phosphate reductase (417 aa).

This sequence belongs to the gamma-glutamyl phosphate reductase family.

Its subcellular location is the cytoplasm. It catalyses the reaction L-glutamate 5-semialdehyde + phosphate + NADP(+) = L-glutamyl 5-phosphate + NADPH + H(+). Its pathway is amino-acid biosynthesis; L-proline biosynthesis; L-glutamate 5-semialdehyde from L-glutamate: step 2/2. In terms of biological role, catalyzes the NADPH-dependent reduction of L-glutamate 5-phosphate into L-glutamate 5-semialdehyde and phosphate. The product spontaneously undergoes cyclization to form 1-pyrroline-5-carboxylate. This Aeromonas salmonicida (strain A449) protein is Gamma-glutamyl phosphate reductase.